The primary structure comprises 406 residues: 4-O-methyl-glucuronoyl methylesterase (406 aa).

The signal sequence occupies residues Met1 to Ala17. An intrachain disulfide couples Cys31 to Cys64. 4 N-linked (GlcNAc...) asparagine glycosylation sites follow: Asn100, Asn110, Asn122, and Asn178. The GXSYXG catalytic site motif signature appears at Gly215 to Gly220. Intrachain disulfides connect Cys216–Cys352 and Cys248–Cys324. Ser217 serves as the catalytic Nucleophile. Substrate-binding residues include Lys221, Gln263, and Glu271. An N-linked (GlcNAc...) asparagine glycan is attached at Asn285. Trp315 serves as a coordination point for substrate. Residue Asn348 is glycosylated (N-linked (GlcNAc...) asparagine). His351 functions as the Proton donor/acceptor in the catalytic mechanism. Asn376, Asn387, and Asn398 each carry an N-linked (GlcNAc...) asparagine glycan.

Belongs to the carbohydrate esterase 15 (CE15) family.

The protein resides in the secreted. The catalysed reaction is a 4-O-methyl-alpha-D-glucuronosyl ester derivative + H2O = 4-O-methyl-alpha-D-glucuronate derivative + an alcohol + H(+). Glucuronoyl esterase which may play a significant role in biomass degradation, as it is considered to disconnect hemicellulose from lignin through the hydrolysis of the ester bond between 4-O-methyl-D-glucuronic acid residues of glucuronoxylans and aromatic alcohols of lignin. The protein is 4-O-methyl-glucuronoyl methylesterase of Phanerochaete carnosa (strain HHB-10118-sp) (White-rot fungus).